We begin with the raw amino-acid sequence, 131 residues long: Ribosome-binding factor A (131 aa).

This sequence belongs to the RbfA family. As to quaternary structure, monomer. Binds 30S ribosomal subunits, but not 50S ribosomal subunits or 70S ribosomes.

It is found in the cytoplasm. Functionally, one of several proteins that assist in the late maturation steps of the functional core of the 30S ribosomal subunit. Associates with free 30S ribosomal subunits (but not with 30S subunits that are part of 70S ribosomes or polysomes). Required for efficient processing of 16S rRNA. May interact with the 5'-terminal helix region of 16S rRNA. This chain is Ribosome-binding factor A, found in Gloeothece citriformis (strain PCC 7424) (Cyanothece sp. (strain PCC 7424)).